The following is a 263-amino-acid chain: uncharacterized protein (263 aa).

31-38 (GPTGSGKT) serves as a coordination point for ATP.

The protein belongs to the CbbQ/NirQ/NorQ/GpvN family.

This is an uncharacterized protein from Staphylococcus aureus (strain bovine RF122 / ET3-1).